Here is a 256-residue protein sequence, read N- to C-terminus: GDSL esterase/lipase At1g18120 (256 aa).

Positions 1 to 49 (MYRVYKNNKFILISIPRITNKLWQKNCNLVILLGVLLVLTLFHDPIIVA) are cleaved as a signal peptide. The active-site Nucleophile is Ser67. Asn181 is a glycosylation site (N-linked (GlcNAc...) asparagine).

It belongs to the 'GDSL' lipolytic enzyme family.

It is found in the secreted. The chain is GDSL esterase/lipase At1g18120 from Arabidopsis thaliana (Mouse-ear cress).